A 493-amino-acid polypeptide reads, in one-letter code: Galactose-1-phosphate uridylyltransferase (493 aa).

It belongs to the galactose-1-phosphate uridylyltransferase type 2 family.

The protein resides in the cytoplasm. The enzyme catalyses alpha-D-galactose 1-phosphate + UDP-alpha-D-glucose = alpha-D-glucose 1-phosphate + UDP-alpha-D-galactose. It participates in carbohydrate metabolism; galactose metabolism. In Streptococcus thermophilus (strain ATCC BAA-250 / LMG 18311), this protein is Galactose-1-phosphate uridylyltransferase.